Here is a 196-residue protein sequence, read N- to C-terminus: Putative NADH dehydrogenase/NAD(P)H nitroreductase PXO_03909 (196 aa).

The protein belongs to the nitroreductase family. HadB/RutE subfamily. The cofactor is FMN.

The polypeptide is Putative NADH dehydrogenase/NAD(P)H nitroreductase PXO_03909 (Xanthomonas oryzae pv. oryzae (strain PXO99A)).